A 327-amino-acid chain; its full sequence is Lipoyl synthase (327 aa).

Residues Cys72, Cys77, Cys83, Cys98, Cys102, Cys105, and Ser313 each contribute to the [4Fe-4S] cluster site. Residues 83-302 (CWSHGTATIM…RRVGLEKGFL (220 aa)) form the Radical SAM core domain.

Belongs to the radical SAM superfamily. Lipoyl synthase family. [4Fe-4S] cluster serves as cofactor.

The protein resides in the cytoplasm. It carries out the reaction [[Fe-S] cluster scaffold protein carrying a second [4Fe-4S](2+) cluster] + N(6)-octanoyl-L-lysyl-[protein] + 2 oxidized [2Fe-2S]-[ferredoxin] + 2 S-adenosyl-L-methionine + 4 H(+) = [[Fe-S] cluster scaffold protein] + N(6)-[(R)-dihydrolipoyl]-L-lysyl-[protein] + 4 Fe(3+) + 2 hydrogen sulfide + 2 5'-deoxyadenosine + 2 L-methionine + 2 reduced [2Fe-2S]-[ferredoxin]. The protein operates within protein modification; protein lipoylation via endogenous pathway; protein N(6)-(lipoyl)lysine from octanoyl-[acyl-carrier-protein]: step 2/2. Functionally, catalyzes the radical-mediated insertion of two sulfur atoms into the C-6 and C-8 positions of the octanoyl moiety bound to the lipoyl domains of lipoate-dependent enzymes, thereby converting the octanoylated domains into lipoylated derivatives. This Francisella philomiragia subsp. philomiragia (strain ATCC 25017 / CCUG 19701 / FSC 153 / O#319-036) protein is Lipoyl synthase.